Consider the following 384-residue polypeptide: uncharacterized protein (384 aa).

Disordered regions lie at residues 133-257 and 297-368; these read RQNS…TNQD and ERTP…STAT. Residues 143 to 157 are compositionally biased toward low complexity; the sequence is PSTSSEPEPQPSTSS. The span at 302 to 315 shows a compositional bias: acidic residues; it reads DQTDITDDSADWSE. The segment covering 316–342 has biased composition (basic and acidic residues); sequence GETRRPSHSEVGERRLSRENNSEDPNR. Residues 343–363 show a composition bias toward basic residues; it reads SRSRSRSRERRRRRPRVRPGR.

This is an uncharacterized protein from Gallid herpesvirus 2 (strain Chicken/Md5/ATCC VR-987) (GaHV-2).